The following is a 706-amino-acid chain: LKSLTVLAESPVESRELLTELGVEKVIVEGKTAARVTQGDSDKPKQVPPNQEGKEEAPVATAAQPKEPAEQPDAKEGPAEGQQPGGVDNAAEASPAAVSPSRPQPAESEVGNSSPGEKGSDAPSTEARGMELEGKEEEGEAMVEDEEEAKIPKAAQPKSESKENAEDNESGSTDSGQENSGETRLLRSGTYSDRTESKAYAAVTHKCEDCGKEFTHTGNFKRHIRIHTGEKPFSCRECNKAFSDPAACKAHEKTHSPLKPYGCEECGKSYRLISLLNLHKKRHTGEAKYRCDDCGKLFTTSGNLKRHQLVHSGEKPYQCDYCGRSFSDPTSKMRHLETHDTDKEHKCPHCDKKFNQVGNLKAHLKIHIADGPLKCRECGNEFTTSGNLKRHLRIHSGEKPYVCVHCQRQFADPGALQAHVPIHTGEKPCQCLICGKAFTQASSLIAHVRHDTGEKPYVCERCGKRFVQSSQLANHIRHHDNIRPHKCTVCNKAFVNVGDLSKHIIIHTGEKPFLCDKCGRGFNRVDNLRSHVKTVHQGKAGMKILEPEDGSELNIVTVASDDMVTLATEALAATAVTQLTVVPVAAAVTADETEALKAEITKAVKQVQEADPNTQILYACDSCGEKFLDATSLAQHVRIHTAQALVMFQADTDFYQQYGAAAATWQTEQVIPATELLFRPRDSPQEAPAAPLAPVPLAGEGQAPAE.

The 12-residue stretch at 1-12 folds into the BTB domain; it reads LKSLTVLAESPV. Residues 32–194 form a disordered region; sequence TAARVTQGDS…LLRSGTYSDR (163 aa). Residues 67–78 show a composition bias toward basic and acidic residues; the sequence is EPAEQPDAKEGP. Low complexity predominate over residues 90–106; it reads AAEASPAAVSPSRPQPA. Residues 134-148 show a composition bias toward acidic residues; that stretch reads GKEEEGEAMVEDEEE. A compositionally biased stretch (polar residues) spans 170 to 182; that stretch reads SGSTDSGQENSGE. C2H2-type zinc fingers lie at residues 205–227, 233–255, 261–283, 289–311, 317–339, 345–367, 373–395, 401–423, 427–450, 457–479, 485–507, 513–536, and 618–640; these read HKCE…IRIH, FSCR…EKTH, YGCE…KKRH, YRCD…QLVH, YQCD…LETH, HKCP…LKIH, LKCR…LRIH, YVCV…VPIH, KPCQ…HVRH, YVCE…IRHH, HKCT…IIIH, FLCD…KTVH, and YACD…VRIH. The segment at 680-706 is disordered; it reads PRDSPQEAPAAPLAPVPLAGEGQAPAE. Positions 687-698 are enriched in low complexity; that stretch reads APAAPLAPVPLA.

It belongs to the krueppel C2H2-type zinc-finger protein family.

It localises to the nucleus. Its function is as follows. Transcription factor that can function as an activator or repressor depending on its binding partners, and by targeting negative regulators of cell cycle progression. Plays a critical role in early lymphocyte development, where it is essential to prevent apoptosis in lymphoid precursors, allowing them to survive in response to IL7 and undergo proper lineage commitment. Has been shown to bind to the promoters of adenovirus major late protein and cyclin D1 and activate transcription. Required for early embryonic development during gastrulation. Represses RB1 transcription. This Gallus gallus (Chicken) protein is Zinc finger and BTB domain-containing protein 17 (ZBTB17).